The following is a 235-amino-acid chain: Intron-encoded endonuclease I-SceI (235 aa).

It belongs to the LAGLIDADG endonuclease family. In terms of assembly, monomer. Requires Mg(2+) as cofactor.

It is found in the mitochondrion. Functionally, mitochondrial DNA endonuclease involved in intron homing. It introduces a specific double-strand break in the DNA of the 21S rRNA gene and thus mediates the insertion of an intron, containing its own coding sequence (group I intron), into an intronless gene. Specifically recognizes and cleaves the sequence 5'-TAGGGATAACAGGGTAAT-3'. The protein is Intron-encoded endonuclease I-SceI (SCEI) of Saccharomyces cerevisiae (strain ATCC 204508 / S288c) (Baker's yeast).